A 110-amino-acid chain; its full sequence is Protein YcgL (110 aa).

Residues 14-98 (MFCVIYRSSK…PPEDLLKQHL (85 aa)) enclose the YcgL domain.

The polypeptide is Protein YcgL (Salmonella arizonae (strain ATCC BAA-731 / CDC346-86 / RSK2980)).